A 338-amino-acid chain; its full sequence is Flap endonuclease 1 (338 aa).

Positions 1–98 (MGTDIGDLLL…DTLAKRHEVR (98 aa)) are N-domain. Asp27, Asp80, Glu152, Glu154, Asp173, Asp175, and Asp236 together coordinate Mg(2+). Residues 116-257 (EAYKYAQASS…RALKLVKEHG (142 aa)) are I-domain. The segment at 330 to 338 (SQSTLDQWF) is interaction with PCNA.

It belongs to the XPG/RAD2 endonuclease family. FEN1 subfamily. As to quaternary structure, interacts with PCNA. PCNA stimulates the nuclease activity without altering cleavage specificity. It depends on Mg(2+) as a cofactor.

Its function is as follows. Structure-specific nuclease with 5'-flap endonuclease and 5'-3' exonuclease activities involved in DNA replication and repair. During DNA replication, cleaves the 5'-overhanging flap structure that is generated by displacement synthesis when DNA polymerase encounters the 5'-end of a downstream Okazaki fragment. Binds the unpaired 3'-DNA end and kinks the DNA to facilitate 5' cleavage specificity. Cleaves one nucleotide into the double-stranded DNA from the junction in flap DNA, leaving a nick for ligation. Also involved in the base excision repair (BER) pathway. Acts as a genome stabilization factor that prevents flaps from equilibrating into structures that lead to duplications and deletions. Also possesses 5'-3' exonuclease activity on nicked or gapped double-stranded DNA. The polypeptide is Flap endonuclease 1 (Methanococcoides burtonii (strain DSM 6242 / NBRC 107633 / OCM 468 / ACE-M)).